The sequence spans 219 residues: UPF0319 protein MS0844 (219 aa).

The N-terminal stretch at 1 to 21 (MKFRLTALAVAALLTSTASFA) is a signal peptide.

The protein belongs to the UPF0319 family.

The protein is UPF0319 protein MS0844 of Mannheimia succiniciproducens (strain KCTC 0769BP / MBEL55E).